Here is a 382-residue protein sequence, read N- to C-terminus: Mannitol-1-phosphate 5-dehydrogenase (382 aa).

4-15 is a binding site for NAD(+); sequence AVHFGAGNIGRG.

This sequence belongs to the mannitol dehydrogenase family.

It catalyses the reaction D-mannitol 1-phosphate + NAD(+) = beta-D-fructose 6-phosphate + NADH + H(+). In Vibrio vulnificus (strain YJ016), this protein is Mannitol-1-phosphate 5-dehydrogenase.